Here is an 80-residue protein sequence, read N- to C-terminus: Penaeidin-3 (80 aa).

The N-terminal stretch at 1-19 is a signal peptide; sequence MRLVVCLVYLVSFALVCQG. Gln20 is modified (pyrrolidone carboxylic acid). 3 disulfides stabilise this stretch: Cys54-Cys67, Cys57-Cys74, and Cys68-Cys75.

The protein belongs to the penaeidin family. Post-translationally, the N-terminus forms pyrrolidone carboxylic acid. Strongly expressed in hemocytes, and to a lesser extent in heart, muscle, gills, intestine and eyestalk. Lowest expression in hepatopancreas.

It is found in the cytoplasmic granule. In terms of biological role, antibacterial and antifungal activity. Presents chitin-binding activity. This is Penaeidin-3 from Penaeus indicus (Indian white prawn).